Here is a 1079-residue protein sequence, read N- to C-terminus: DNA annealing helicase and endonuclease ZRANB3 (1079 aa).

The 163-residue stretch at 46-208 (IFALKRNGRC…FMQIEALFPQ (163 aa)) folds into the Helicase ATP-binding domain. The DNA annealing helicase activity stretch occupies residues 46–481 (IFALKRNGRC…GRKEKIQAEE (436 aa)). 59–66 (DEMGLGKT) lines the ATP pocket. A DEAH box motif is present at residues 157–160 (DESH). In terms of domain architecture, Helicase C-terminal spans 325-481 (AVKDYIKMML…GRKEKIQAEE (157 aa)). Residues 519–526 (QHDIRSFF) carry the PIP-box motif. S569 bears the Phosphoserine mark. The disordered stretch occupies residues 582-601 (ASEDHCSPSEETPSQSKQIR). Polar residues predominate over residues 590–600 (SEETPSQSKQI). The segment at 621-650 (PVEGWQCSLCTYINNSELPYCEMCETPQGS) adopts a RanBP2-type zinc-finger fold. The residue at position 630 (C630) is a (Microbial infection) S-methylcysteine. Positions 689–725 (LAQSEPGQLADSKEETPKIEKEDGLTSQPGNEQWKSS) are disordered. Over residues 699–712 (DSKEETPKIEKEDG) the composition is skewed to basic and acidic residues. Residues 713–725 (LTSQPGNEQWKSS) are compositionally biased toward polar residues. Residues 1011 to 1051 (PGEGHFWQVDHIKPVYGGGGQCSLDNLQTLCTVCHKERTAR) form the HNH domain. The endonuclease activity stretch occupies residues 1011 to 1079 (PGEGHFWQVD…SDITRFLVKK (69 aa)). Residues 1074–1078 (RFLVK) carry the APIM motif motif.

This sequence belongs to the SNF2/RAD54 helicase family. Interacts (via PIP-box and RanBP2-type zinc finger) with PCNA (when PCNA is polyubiquitinated via 'Lys-63'-linked polyubiquitin). In terms of processing, (Microbial infection) Methylation at Cys-630 by enteropathogenic E.coli protein NleE or S.flexneri protein OspZ: methylation disrupts ability to bind 'Lys-63'-linked ubiquitin.

The protein localises to the nucleus. It localises to the chromosome. Its function is as follows. DNA annealing helicase and endonuclease required to maintain genome stability at stalled or collapsed replication forks by facilitating fork restart and limiting inappropriate recombination that could occur during template switching events. Recruited to the sites of stalled DNA replication by polyubiquitinated PCNA and acts as a structure-specific endonuclease that cleaves the replication fork D-loop intermediate, generating an accessible 3'-OH group in the template of the leading strand, which is amenable to extension by DNA polymerase. In addition to endonuclease activity, also catalyzes the fork regression via annealing helicase activity in order to prevent disintegration of the replication fork and the formation of double-strand breaks. The sequence is that of DNA annealing helicase and endonuclease ZRANB3 from Homo sapiens (Human).